A 257-amino-acid polypeptide reads, in one-letter code: UPF0246 protein Spro_0686 (257 aa).

It belongs to the UPF0246 family.

The polypeptide is UPF0246 protein Spro_0686 (Serratia proteamaculans (strain 568)).